The sequence spans 445 residues: Alkylglycerol monooxygenase (445 aa).

The next 2 helical transmembrane spans lie at 43–63 and 111–131; these read ATPF…ILKG and WDSP…YYWF. The 130-residue stretch at 120-249 folds into the Fatty acid hydroxylase domain; sequence AFLGVDFGYY…LIIWDKIFGT (130 aa). Residues 132 to 136 carry the Histidine box-1 motif; it reads HRMAH. A Histidine box-2 motif is present at residues 145 to 149; sequence HQTHH. The Histidine box-3 motif lies at 221–225; that stretch reads HRVHH. Helical transmembrane passes span 334–354, 363–383, and 413–433; these read LLKI…EETF, VTLL…GFLL, and VPSL…FWGV.

Belongs to the sterol desaturase family. TMEM195 subfamily. The cofactor is Fe cation.

The protein resides in the endoplasmic reticulum membrane. The enzyme catalyses 1-O-(1,2-saturated-alkyl)-sn-glycerol + (6R)-L-erythro-5,6,7,8-tetrahydrobiopterin + O2 = a 1-(1-hydroxyalkyl)-sn-glycerol + (6R)-L-erythro-6,7-dihydrobiopterin + H2O. In terms of biological role, glyceryl-ether monooxygenase that cleaves the O-alkyl bond of ether lipids. Ether lipids are essential components of brain membranes. This Homo sapiens (Human) protein is Alkylglycerol monooxygenase (AGMO).